A 360-amino-acid chain; its full sequence is Epoxyqueuosine reductase (360 aa).

The active-site Proton donor is the Asp142. Residues 187-216 (APTEPVTAHCGSCQACMDVCPTQAIVAPHR) form the 4Fe-4S ferredoxin-type domain. [4Fe-4S] cluster contacts are provided by Cys196, Cys199, Cys202, Cys206, Cys222, Cys249, Cys252, and Cys256.

This sequence belongs to the QueG family. In terms of assembly, monomer. Cob(II)alamin serves as cofactor. The cofactor is [4Fe-4S] cluster.

It is found in the cytoplasm. The enzyme catalyses epoxyqueuosine(34) in tRNA + AH2 = queuosine(34) in tRNA + A + H2O. It participates in tRNA modification; tRNA-queuosine biosynthesis. Functionally, catalyzes the conversion of epoxyqueuosine (oQ) to queuosine (Q), which is a hypermodified base found in the wobble positions of tRNA(Asp), tRNA(Asn), tRNA(His) and tRNA(Tyr). This chain is Epoxyqueuosine reductase, found in Alicycliphilus denitrificans (strain DSM 14773 / CIP 107495 / K601).